We begin with the raw amino-acid sequence, 138 residues long: Lutropin subunit beta (138 aa).

A signal peptide spans 1–19 (RYQELTVLLLLLLEGGSWG). 6 cysteine pairs are disulfide-bonded: Cys27-Cys75, Cys41-Cys90, Cys44-Cys128, Cys52-Cys106, Cys56-Cys108, and Cys111-Cys118. A glycan (N-linked (GlcNAc...) asparagine) is linked at Asn31.

Belongs to the glycoprotein hormones subunit beta family. Heterodimer of a common alpha chain and a unique beta chain which confers biological specificity to thyrotropin, lutropin, follitropin and gonadotropin.

Its subcellular location is the secreted. Its function is as follows. Promotes spermatogenesis and ovulation by stimulating the testes and ovaries to synthesize steroids. The protein is Lutropin subunit beta (LHB) of Osphranter rufus (Red kangaroo).